A 583-amino-acid polypeptide reads, in one-letter code: Sensor protein SrrB (583 aa).

Residues 1–11 (MMSRLNSVVIK) lie on the Cytoplasmic side of the membrane. The helical transmembrane segment at 12–32 (LWLTIILIVTTVLILLSIALI) threads the bilayer. Residues 33–174 (TFMQYYFTQE…SIEDTNNAIT (142 aa)) are Extracellular-facing. A helical membrane pass occupies residues 175 to 195 (IITIITAVIFLTITTVFAFFL). The Cytoplasmic portion of the chain corresponds to 196-583 (SSRITKPLRR…TFIIKLPKPE (388 aa)). Residues 197–249 (SRITKPLRRLRDQATRVSEGDYSYKPSVTTKDEIGQLSQAFNQMSTEIEEHVD) form the HAMP domain. A Histidine kinase domain is found at 366 to 583 (NVSHELRTPI…TFIIKLPKPE (218 aa)). His369 is subject to Phosphohistidine; by autocatalysis.

Its subcellular location is the cell membrane. It carries out the reaction ATP + protein L-histidine = ADP + protein N-phospho-L-histidine.. Functionally, member of the two-component regulatory system SrrA/SrrB, which is involved in the global regulation of staphylococcal virulence factors in response to environmental oxygen levels as well as biofilm formation. Also plays an essential role in host-derived nitric oxide resistance by regulating hmp/flavohemoglobin, an enzyme that detoxifies nitric oxide by converting it to nitrate. Functions as a sensor protein kinase which is autophosphorylated at a histidine residue and transfers its phosphate group to SrrA. In turn, SrrA binds to the upstream promoter regions of the target genes to positively and negatively regulate their expression. The protein is Sensor protein SrrB (srrB) of Staphylococcus aureus (strain Mu50 / ATCC 700699).